The sequence spans 118 residues: V-type proton ATPase subunit G 1 (118 aa).

The residue at position 2 (Ala2) is an N-acetylalanine. The tract at residues 19 to 42 is disordered; sequence AEKVSEARKRKNRRLKQAKEEAQA.

The protein belongs to the V-ATPase G subunit family. As to quaternary structure, V-ATPase is a heteromultimeric enzyme made up of two complexes: the ATP-hydrolytic V1 complex and the proton translocation V0 complex. The V1 complex consists of three catalytic AB heterodimers that form a heterohexamer, three peripheral stalks each consisting of EG heterodimers, one central rotor including subunits D and F, and the regulatory subunits C and H. The proton translocation complex V0 consists of the proton transport subunit a, a ring of proteolipid subunits c9c'', rotary subunit d, subunits e and f, and the accessory subunits ATP6AP1/Ac45 and ATP6AP2/PRR. In terms of tissue distribution, brain, heart, kidney and spleen.

It localises to the apical cell membrane. Its function is as follows. Subunit of the V1 complex of vacuolar(H+)-ATPase (V-ATPase), a multisubunit enzyme composed of a peripheral complex (V1) that hydrolyzes ATP and a membrane integral complex (V0) that translocates protons. V-ATPase is responsible for acidifying and maintaining the pH of intracellular compartments and in some cell types, is targeted to the plasma membrane, where it is responsible for acidifying the extracellular environment. In aerobic conditions, involved in intracellular iron homeostasis, thus triggering the activity of Fe(2+) prolyl hydroxylase (PHD) enzymes, and leading to HIF1A hydroxylation and subsequent proteasomal degradation. This chain is V-type proton ATPase subunit G 1 (ATP6V1G1), found in Bos taurus (Bovine).